We begin with the raw amino-acid sequence, 1010 residues long: DENN domain-containing protein 1A (1010 aa).

Residues 13-143 (FEVYIEVNRP…HGHPIPEPGT (131 aa)) form the uDENN domain. The cDENN domain occupies 160-296 (ELPSIPENRN…VVSALKNRIR (137 aa)). In terms of domain architecture, dDENN spans 298–375 (MSTTTGDGVA…DGRLDLLNSG (78 aa)). Positions 378–382 (FSDVF) match the FXDXF motif motif. Positions 455–554 (GFSTATEEPL…EATVKEPQST (100 aa)) are disordered. Residues 472–482 (IEKKRGEERRP) show a composition bias toward basic and acidic residues. Basic residues predominate over residues 493–502 (PRPHVPRRPK). Residues 509-524 (SRTTAGSSPDQPQQYR) show a composition bias toward polar residues. Residues 538–548 (SPEKDSSEATV) show a composition bias toward basic and acidic residues. The short motif at 560–569 (SLLEDIFSNL) is the Clathrin box element.

Its subcellular location is the cytoplasmic vesicle. The protein localises to the clathrin-coated vesicle membrane. It localises to the presynaptic cell membrane. Functionally, guanine nucleotide exchange factor (GEF) regulating clathrin-mediated endocytosis through RAB35 activation. Promotes the exchange of GDP to GTP, converting inactive GDP-bound RAB35 into its active GTP-bound form. Regulates clathrin-mediated endocytosis of synaptic vesicles and mediates exit from early endosomes. Binds phosphatidylinositol-phosphates (PtdInsPs), with some preference for PtdIns(3)P. This chain is DENN domain-containing protein 1A (dennd1a), found in Xenopus laevis (African clawed frog).